Reading from the N-terminus, the 541-residue chain is MASVGTLAFDEYGRPFLIIKDQDRKSRLMGLEALKSHIMAAKAVANTMRTSLGPNGLDKMMVDKDGDVTVTNDGATILSMMDVDHQIAKLMVELSKSQDDEIGDGTTGVVVLAGALLEEAEQLLDRGIHPIRIADGYEQAARIAIQHLDKISDNVLVDINNPEPLIQTAKTTLGSKVVNSCHRQMAEIAVNAVLTVADMERRDVDFELIKVEGKVGGRLEDTKLIKGVIVDKDFSHPQMPKEVLNAKIAILTCPFEPPKPKTKHKLDVTSVEDYKALQKYEKEKFEEMIAQIKETGANLAICQWGFDDEANHLLLQNGLPAVRWVGGPEIELIAIATGGRIVPRFSELTSEKLGFAGVVREISFGTTKDKMLVIEQCKNSRAVTIFIRGGNKMIIEEAKRSLHDALCVIRNLIRDNRVVYGGGAAEISCALAVSQEADKCPTLEQYAMRAFADALEVIPMALSENSGMNPIQTMTEVRARQVKESNPALGIDCLHKGSNDMQYQHVIETLIGKKQQISLATQMVRMILKIDDIRKPGESEE.

Alanine 2 carries the post-translational modification N-acetylalanine. Lysine 20 is covalently cross-linked (Glycyl lysine isopeptide (Lys-Gly) (interchain with G-Cter in SUMO2)). At serine 26 the chain carries Phosphoserine. Residue glycine 53 coordinates ADP. Residue glycine 53 participates in ATP binding. A Mg(2+)-binding site is contributed by aspartate 104. Residues glycine 105, threonine 106, threonine 107, and serine 175 each coordinate ADP. ATP-binding residues include threonine 106 and threonine 107. Glycyl lysine isopeptide (Lys-Gly) (interchain with G-Cter in SUMO2) cross-links involve residues lysine 210, lysine 214, lysine 265, lysine 275, and lysine 279. At serine 346 the chain carries Phosphoserine. Lysine 392 participates in a covalent cross-link: Glycyl lysine isopeptide (Lys-Gly) (interchain with G-Cter in SUMO2). Positions 422, 492, 508, and 513 each coordinate ADP. An ATP-binding site is contributed by glycine 422. Serine 539 is modified (phosphoserine).

This sequence belongs to the TCP-1 chaperonin family. As to quaternary structure, component of the chaperonin-containing T-complex (TRiC), a hexadecamer composed of two identical back-to-back stacked rings enclosing a protein folding chamber. Each ring is made up of eight different subunits: TCP1/CCT1, CCT2, CCT3, CCT4, CCT5, CCT6A/CCT6, CCT7, CCT8. Interacts with PACRG. Interacts with DNAAF4. Interacts with DLEC1. Interacts with SPMAP2. Post-translationally, ubiquitinated by the DCX(DCAF12) complex specifically recognizes the diglutamate (Glu-Glu) at the C-terminus, leading to its degradation.

It localises to the cytoplasm. The protein localises to the cytoskeleton. It is found in the microtubule organizing center. The protein resides in the centrosome. It catalyses the reaction ATP + H2O = ADP + phosphate + H(+). In terms of biological role, component of the chaperonin-containing T-complex (TRiC), a molecular chaperone complex that assists the folding of actin, tubulin and other proteins upon ATP hydrolysis. The TRiC complex mediates the folding of WRAP53/TCAB1, thereby regulating telomere maintenance. As part of the TRiC complex may play a role in the assembly of BBSome, a complex involved in ciliogenesis regulating transports vesicles to the cilia. The polypeptide is T-complex protein 1 subunit epsilon (Cct5) (Rattus norvegicus (Rat)).